The chain runs to 162 residues: Heat shock protein beta-6 (162 aa).

The segment at 1–72 is involved in stabilization of the HSPB1:HSBP6 heterodimer; that stretch reads MEIPVPVQPS…PTAQVSTDSG (72 aa). Ser16 carries the phosphoserine modification. The sHSP domain occupies 56 to 162; it reads RAPSVALPTA…AQLPSPPAAK (107 aa). Gln66 is modified (deamidated glutamine). At Ser157 the chain carries Phosphoserine.

It belongs to the small heat shock protein (HSP20) family. Homodimer. Small heat shock proteins form high molecular mass oligomers containing variable number of monomers; these oligomers display a very flexible quaternary structure easily exchanging their subunits. Heterooligomer with HSPB1; formed through oligomerization of HSPB1:HSBP6 dimers; subunit exchange leads to formation of at least two different heterooligomeric complexes, differing in variable quantities of HSPB1 and HSPB6 homodimers in addition to HSPB1:HSPB6 heterodimers. Heterooligomer with CRYAB; large heterooligomers consist of CRYAB homodimers and HSPB5:HSPB6 heterodimers but lacking HSPB6 homodimers. Interacts with BAG3. Interacts (phosphorylated) with YWHAZ. Interacts with PDE4A and PDE4D; required for maintenance of the non-phosphorylated state of HSPB6 under basal conditions. Interacts with KDR. Interacts with PRKD1. In terms of processing, phosphorylated at Ser-16 by PKA and probably PKD1K; required to protect cardiomyocytes from apoptosis.

The protein resides in the cytoplasm. It localises to the nucleus. It is found in the secreted. Functionally, small heat shock protein which functions as a molecular chaperone probably maintaining denatured proteins in a folding-competent state. Seems to have versatile functions in various biological processes. Plays a role in regulating muscle function such as smooth muscle vasorelaxation and cardiac myocyte contractility. May regulate myocardial angiogenesis implicating KDR. Overexpression mediates cardioprotection and angiogenesis after induced damage. Stabilizes monomeric YWHAZ thereby supporting YWHAZ chaperone-like activity. The sequence is that of Heat shock protein beta-6 (Hspb6) from Mus musculus (Mouse).